The sequence spans 222 residues: N-acetyltransferase 8B (222 aa).

Residues 1–42 (MVSYHICEYQDSDYKSVVDVFTKGAEEYIPSTFRHLLLLPRT) are Cytoplasmic-facing. Residues 43–67 (LLLLLGVSLALVLVSGSWLLAVVCI) traverse the membrane as a helical; Signal-anchor for type II membrane protein segment. One can recognise an N-acetyltransferase domain in the interval 62–217 (LAVVCIFFLL…VGIRFVQLNY (156 aa)). Over 68–222 (FFLLPFLWFL…VQLNYSFPSA (155 aa)) the chain is Lumenal. An N6-acetyllysine modification is found at Lys-99.

Belongs to the NAT8 family. Acetylation on Lys-99 modulates enzymatic activity.

The protein localises to the endoplasmic reticulum-Golgi intermediate compartment membrane. The protein resides in the endoplasmic reticulum membrane. The catalysed reaction is L-lysyl-[protein] + acetyl-CoA = N(6)-acetyl-L-lysyl-[protein] + CoA + H(+). Its function is as follows. Endoplasmic reticulum (ER)-membrane-bound lysine N-acetyltransferase catalyzing the N6-acetylation of lysine residues in the lumen of the ER in various proteins, including PROM1 and BACE1, using acetyl-CoA as acetyl donor. Thereby, may regulate apoptosis through the acetylation and the regulation of the expression of PROM1. Acetylates and stabilizes BACE1 immature protein, leading to increased steady-state levels in neurons. By acting on BACE1 expression, may regulate amyloid beta-peptide formation. N(6)-lysine acetylation in ER maintains protein homeostasis and regulates reticulophagy. This chain is N-acetyltransferase 8B, found in Rattus norvegicus (Rat).